The sequence spans 105 residues: TPR repeat-containing protein PA0015 (105 aa).

2 TPR repeats span residues 17-50 (ALLRFGLGKGYLDAGDAERAAEHLQRCVEQDPKY) and 52-84 (AGWKLLGKARQAAGDLAGARQAWEQGLATAATH).

The sequence is that of TPR repeat-containing protein PA0015 from Pseudomonas aeruginosa (strain ATCC 15692 / DSM 22644 / CIP 104116 / JCM 14847 / LMG 12228 / 1C / PRS 101 / PAO1).